The following is a 397-amino-acid chain: Stearoyl-[acyl-carrier-protein] 9-desaturase, chloroplastic (397 aa).

Residues 1-33 constitute a chloroplast transit peptide; that stretch reads MALNFNAIASKSQKLPCFALPPKATLRSPKFSM. Positions 138, 176, 179, 229, 262, and 265 each coordinate Fe cation.

Belongs to the fatty acid desaturase type 2 family. In terms of assembly, homodimer. Requires Fe(2+) as cofactor.

The protein resides in the plastid. The protein localises to the chloroplast. The enzyme catalyses octadecanoyl-[ACP] + 2 reduced [2Fe-2S]-[ferredoxin] + O2 + 2 H(+) = (9Z)-octadecenoyl-[ACP] + 2 oxidized [2Fe-2S]-[ferredoxin] + 2 H2O. The protein operates within lipid metabolism; fatty acid metabolism. Functionally, converts stearoyl-ACP to oleoyl-ACP by introduction of a cis double bond between carbons 9 and 10 of the acyl chain. In Gossypium hirsutum (Upland cotton), this protein is Stearoyl-[acyl-carrier-protein] 9-desaturase, chloroplastic.